The chain runs to 224 residues: PKHD-type hydroxylase Shewana3_0717 (224 aa).

Positions 78-176 (QFYPPLFNRY…RTAAFMWLQS (99 aa)) constitute a Fe2OG dioxygenase domain. Fe cation is bound by residues histidine 96, aspartate 98, and histidine 157. Position 167 (arginine 167) interacts with 2-oxoglutarate.

Fe(2+) is required as a cofactor. Requires L-ascorbate as cofactor.

This is PKHD-type hydroxylase Shewana3_0717 from Shewanella sp. (strain ANA-3).